Reading from the N-terminus, the 497-residue chain is GTPase-activating protein GYP8 (497 aa).

The Rab-GAP TBC domain maps to 69-281 (FVNNSLRKDC…QIFDMTISMQ (213 aa)).

The chain is GTPase-activating protein GYP8 (GYP8) from Saccharomyces cerevisiae (strain ATCC 204508 / S288c) (Baker's yeast).